The sequence spans 158 residues: Glutamyl-tRNA(Gln) amidotransferase subunit C, mitochondrial (158 aa).

It belongs to the GatC family. As to quaternary structure, subunit of the heterotrimeric GatCAB amidotransferase (AdT) complex, composed of A, B and C subunits.

Its subcellular location is the mitochondrion. The catalysed reaction is L-glutamyl-tRNA(Gln) + L-glutamine + ATP + H2O = L-glutaminyl-tRNA(Gln) + L-glutamate + ADP + phosphate + H(+). Allows the formation of correctly charged Gln-tRNA(Gln) through the transamidation of misacylated Glu-tRNA(Gln) in the mitochondria. The reaction takes place in the presence of glutamine and ATP through an activated gamma-phospho-Glu-tRNA(Gln). The polypeptide is Glutamyl-tRNA(Gln) amidotransferase subunit C, mitochondrial (Drosophila grimshawi (Hawaiian fruit fly)).